The sequence spans 223 residues: RNA-free ribonuclease P (223 aa).

It belongs to the HARP family.

It catalyses the reaction Endonucleolytic cleavage of RNA, removing 5'-extranucleotides from tRNA precursor.. RNA-free RNase P that catalyzes the removal of the 5'-leader sequence from pre-tRNA to produce the mature 5'-terminus. This Methanococcus maripaludis (strain C7 / ATCC BAA-1331) protein is RNA-free ribonuclease P.